Reading from the N-terminus, the 593-residue chain is Tyrosine-protein phosphatase non-receptor type 11 (593 aa).

Thr2 carries the post-translational modification N-acetylthreonine. SH2 domains follow at residues 6-102 (WFHP…KYPL) and 112-216 (WFHG…KQPL). Phosphotyrosine is present on residues Tyr62 and Tyr66. A Tyrosine-protein phosphatase domain is found at 247-521 (FWEEFETLQQ…RFIYMAVQHY (275 aa)). Residues Asp425, 459 to 465 (CSAGIGR), and Gln506 contribute to the substrate site. Cys459 (phosphocysteine intermediate) is an active-site residue. Phosphotyrosine; by PDGFR occurs at positions 542 and 580.

It belongs to the protein-tyrosine phosphatase family. Non-receptor class 2 subfamily. As to quaternary structure, interacts with CD84 and with phosphorylated SIT1 and MZPL1. Interacts with FCRL4, FCRL6 and ANKHD1. Interacts with GAREM1 (tyrosine phosphorylated); the interaction increases MAPK/ERK activity and does not affect the GRB2/SOS complex formation. Interacts with PTPNS1 and BCAR3. Interacts with phosphorylated LIME1. Interacts with SHB and INPP5D/SHIP1. Interacts with KIR2DL1; the interaction is enhanced by ARRB2. Interacts with GAB2. Interacts with TERT; the interaction retains TERT in the nucleus. Interacts with PECAM1 and FER. Interacts with EPHA2 (activated); participates in PTK2/FAK1 dephosphorylation in EPHA2 downstream signaling. Interacts with MILR1 (tyrosine phosphorylated). Interacts with FLT1 (tyrosine-phosphorylated), FLT3 (tyrosine-phosphorylated), FLT4 (tyrosine-phosphorylated), KIT and GRB2. Interacts with ROS1; mediates PTPN11 phosphorylation. Interacts with PDGFRA (tyrosine phosphorylated). Interacts with PDGFRB (tyrosine phosphorylated); this interaction increases the PTPN11 phosphatase activity. Interacts (via SH2 domain) with TEK/TIE2 (tyrosine phosphorylated). Interacts with CEACAM1 (via cytoplasmic domain); this interaction depends on the monomer/dimer equilibrium and is phosphorylation-dependent. Interacts with MPIG6B (via ITIM motif). Interacts with SIGLEC10. Interacts with Lilrb4a (when tyrosine phosphorylated). Interacts with SIGLEC10. Interacts with CLEC12B (via ITIM motif); this interaction triggers dephosphorylation and activation of PTPN11. Interacts (via SH2 domains) with NEDD9/CAS-L; the interaction is enhanced when NEDD9/CAS-L is tyrosine phosphorylated. Interacts with PIRB; when PIRB is phosphorylated by LYN at 'Tyr-794' and 'Tyr-824'. In terms of processing, phosphorylated on Tyr-542 and Tyr-580 upon receptor protein tyrosine kinase activation; which creates a binding site for GRB2 and other SH2-containing proteins. Phosphorylated upon activation of the receptor-type kinase FLT3. Phosphorylated by activated PDGFRB. Phosphorylated upon activation of the receptor-type kinase PDGFRA. Highly expressed in brain, heart and kidney.

The protein resides in the cytoplasm. The enzyme catalyses O-phospho-L-tyrosyl-[protein] + H2O = L-tyrosyl-[protein] + phosphate. In terms of biological role, acts downstream of various receptor and cytoplasmic protein tyrosine kinases to participate in the signal transduction from the cell surface to the nucleus. Positively regulates MAPK signal transduction pathway. Dephosphorylates GAB1, ARHGAP35 and EGFR. Dephosphorylates ROCK2 at 'Tyr-722' resulting in stimulation of its RhoA binding activity. Dephosphorylates CDC73. Dephosphorylates SOX9 on tyrosine residues, leading to inactivate SOX9 and promote ossification. Dephosphorylates tyrosine-phosphorylated NEDD9/CAS-L. The protein is Tyrosine-protein phosphatase non-receptor type 11 (Ptpn11) of Mus musculus (Mouse).